The primary structure comprises 161 residues: MEVKVGIGDYAVAKKTGIISTYGLGSCVGITLYDRLNRVGGLLHALLPESARYGGRGNPAKYVDTGLELLIKDMMKLGASPRRLEAKLFGGAHMFTNVSNENLMVGKKNVEVAKRELKKRGIRLVAEDTGGKGGRTIYLDVSTGKVRMRKVSNGKVIEAVF.

The protein belongs to the CheD family.

The catalysed reaction is L-glutaminyl-[protein] + H2O = L-glutamyl-[protein] + NH4(+). In terms of biological role, probably deamidates glutamine residues to glutamate on methyl-accepting chemotaxis receptors (MCPs), playing an important role in chemotaxis. This is Probable chemoreceptor glutamine deamidase CheD from Thermococcus kodakarensis (strain ATCC BAA-918 / JCM 12380 / KOD1) (Pyrococcus kodakaraensis (strain KOD1)).